A 95-amino-acid polypeptide reads, in one-letter code: Co-chaperonin GroES (95 aa).

The protein belongs to the GroES chaperonin family. In terms of assembly, heptamer of 7 subunits arranged in a ring. Interacts with the chaperonin GroEL.

The protein resides in the cytoplasm. Its function is as follows. Together with the chaperonin GroEL, plays an essential role in assisting protein folding. The GroEL-GroES system forms a nano-cage that allows encapsulation of the non-native substrate proteins and provides a physical environment optimized to promote and accelerate protein folding. GroES binds to the apical surface of the GroEL ring, thereby capping the opening of the GroEL channel. The sequence is that of Co-chaperonin GroES from Desulfosudis oleivorans (strain DSM 6200 / JCM 39069 / Hxd3) (Desulfococcus oleovorans).